Consider the following 808-residue polypeptide: uncharacterized protein (808 aa).

35–42 lines the ATP pocket; sequence GPNNVGKT.

This is an uncharacterized protein from Methanocaldococcus jannaschii (strain ATCC 43067 / DSM 2661 / JAL-1 / JCM 10045 / NBRC 100440) (Methanococcus jannaschii).